Here is an 815-residue protein sequence, read N- to C-terminus: DNA topoisomerase 1 (815 aa).

The Toprim domain maps to 3–119 (KHLLIVESPA…QRIVFTEITP (117 aa)). Residues glutamate 9 and aspartate 82 each contribute to the Mg(2+) site. The Topo IA-type catalytic domain maps to 133-573 (ASDLVDAQQA…KFWVPFKELV (441 aa)). The interaction with DNA stretch occupies residues 167-172 (SAGRVQ). The active-site O-(5'-phospho-DNA)-tyrosine intermediate is the tyrosine 308. The interval 759–815 (TGKPARKNFSTKKTATKNETRKQTTKKRTTDAKATKKVSDKPVKKQIKKRIAPNITQ) is disordered. The segment covering 774-801 (TKNETRKQTTKKRTTDAKATKKVSDKPV) has biased composition (basic and acidic residues).

The protein belongs to the type IA topoisomerase family. As to quaternary structure, monomer. Requires Mg(2+) as cofactor.

It carries out the reaction ATP-independent breakage of single-stranded DNA, followed by passage and rejoining.. Releases the supercoiling and torsional tension of DNA, which is introduced during the DNA replication and transcription, by transiently cleaving and rejoining one strand of the DNA duplex. Introduces a single-strand break via transesterification at a target site in duplex DNA. The scissile phosphodiester is attacked by the catalytic tyrosine of the enzyme, resulting in the formation of a DNA-(5'-phosphotyrosyl)-enzyme intermediate and the expulsion of a 3'-OH DNA strand. The free DNA strand then undergoes passage around the unbroken strand, thus removing DNA supercoils. Finally, in the religation step, the DNA 3'-OH attacks the covalent intermediate to expel the active-site tyrosine and restore the DNA phosphodiester backbone. The protein is DNA topoisomerase 1 of Xylella fastidiosa (strain Temecula1 / ATCC 700964).